Consider the following 201-residue polypeptide: Arachin 25 kDa protein (201 aa).

In terms of assembly, this is one of six apparently different protein chains that constitute the peanut protein arachin.

The chain is Arachin 25 kDa protein from Arachis hypogaea (Peanut).